Consider the following 200-residue polypeptide: Golgi to ER traffic protein 1 (200 aa).

Topologically, residues 1–6 (MEPYTL) are lumenal. The helical transmembrane segment at 7 to 26 (LLFIFVIQIVKQIISAVGKQ) threads the bilayer. Over 27–113 (SIESISWVLY…KVNTFTGYLI (87 aa)) the chain is Cytoplasmic. Positions 75–107 (AKWTKLNRQHDKLVAEIEQLQKEVDLDKVKVNT) form a coiled coil. Residues 114–134 (AILTSIPIWFFRVWYRSVVLF) traverse the membrane as a helical segment. Topologically, residues 135–158 (YFPPGILPRALEWSIALPFTVTGG) are lumenal. A helical membrane pass occupies residues 159-175 (VSLTVWMMAAGAVASSL). Residues 176–200 (TFLFMFPFEKAVPKPVLAKKSPQQL) lie on the Cytoplasmic side of the membrane.

This sequence belongs to the WRB/GET1 family. As to quaternary structure, component of the Golgi to ER traffic (GET) complex, which is composed of GET1, GET2 and GET3. Within the complex, GET1 and GET2 form a heterotetramer which is stabilized by phosphatidylinositol binding and which binds to the GET3 homodimer.

It localises to the endoplasmic reticulum membrane. It is found in the golgi apparatus membrane. In terms of biological role, required for the post-translational delivery of tail-anchored (TA) proteins to the endoplasmic reticulum. Together with GET2, acts as a membrane receptor for soluble GET3, which recognizes and selectively binds the transmembrane domain of TA proteins in the cytosol. The GET complex cooperates with the HDEL receptor ERD2 to mediate the ATP-dependent retrieval of resident ER proteins that contain a C-terminal H-D-E-L retention signal from the Golgi to the ER. The chain is Golgi to ER traffic protein 1 from Meyerozyma guilliermondii (strain ATCC 6260 / CBS 566 / DSM 6381 / JCM 1539 / NBRC 10279 / NRRL Y-324) (Yeast).